We begin with the raw amino-acid sequence, 244 residues long: Transcriptional activator protein Anr (244 aa).

21–149 (APLCLPLSLN…RVMSREIRDD (129 aa)) lines the a nucleoside 3',5'-cyclic phosphate pocket. The region spanning 159-232 (KTADERIATF…GKEVHILDPI (74 aa)) is the HTH crp-type domain. The H-T-H motif DNA-binding region spans 192–211 (RNEIGNYLGLAVETVSRVFT).

Transcriptional activator of anaerobic gene expression. Regulates the expression of the components of the hydrogen cyanide synthase (HcnABC) in a positive manner. May also act as an iron sensor. The sequence is that of Transcriptional activator protein Anr from Pseudomonas protegens (strain DSM 19095 / LMG 27888 / CFBP 6595 / CHA0).